We begin with the raw amino-acid sequence, 569 residues long: Beta-galactoside-specific lectin 3 (569 aa).

Residues 1–33 (MNAVMDSRGAWVSCFLILGLVFGATVKAETKFS) form the signal peptide. E198 is a catalytic residue. Disulfide bonds link C280-C311, C327-C346, and C370-C387. The propeptide at 288-307 (EVRYWPLVIRPVLENSGAVD) is connecting peptide. The Ricin B-type lectin 1 domain maps to 314 to 441 (SEPTVRIVGR…YSLGQGWLAG (128 aa)). D-galactose is bound at residue 329-331 (DVR). Residues N402 and N442 are each glycosylated (N-linked (GlcNAc...) asparagine). One can recognise a Ricin B-type lectin 2 domain in the interval 445–568 (APREVTIYGF…GNPNQMWLPV (124 aa)). 2 cysteine pairs are disulfide-bonded: C458-C471 and C497-C514. Position 541–543 (541–543 (DVA)) interacts with D-galactose.

It belongs to the ribosome-inactivating protein family. Type 2 RIP subfamily. Disulfide-linked dimer of A and B chains.

The catalysed reaction is Endohydrolysis of the N-glycosidic bond at one specific adenosine on the 28S rRNA.. Functionally, the A chain is responsible for inhibiting protein synthesis through the catalytic inactivation of 60S ribosomal subunits by removing adenine from position 4,324 of 28S rRNA. The B chain binds to cell receptors and probably facilitates the entry into the cell of the A chain; B chains are also responsible for cell agglutination (lectin activity). Inhibits growth of the human tumor cell line Molt4. This Viscum album (European mistletoe) protein is Beta-galactoside-specific lectin 3.